The primary structure comprises 298 residues: tRNA dimethylallyltransferase (298 aa).

12–19 serves as a coordination point for ATP; the sequence is GPTASGKT. 14–19 lines the substrate pocket; sequence TASGKT. The segment at 37–40 is interaction with substrate tRNA; that stretch reads DSRQ.

This sequence belongs to the IPP transferase family. Monomer. Mg(2+) is required as a cofactor.

The catalysed reaction is adenosine(37) in tRNA + dimethylallyl diphosphate = N(6)-dimethylallyladenosine(37) in tRNA + diphosphate. In terms of biological role, catalyzes the transfer of a dimethylallyl group onto the adenine at position 37 in tRNAs that read codons beginning with uridine, leading to the formation of N6-(dimethylallyl)adenosine (i(6)A). In Synechococcus sp. (strain CC9902), this protein is tRNA dimethylallyltransferase.